The sequence spans 66 residues: Large ribosomal subunit protein bL35 (66 aa).

Residues 1–26 are compositionally biased toward basic residues; the sequence is MPKMKTHRGSAKRFKKTGSGKLKRSH. Residues 1-45 form a disordered region; it reads MPKMKTHRGSAKRFKKTGSGKLKRSHAYTSHLFANKSQKQKRKLR.

This sequence belongs to the bacterial ribosomal protein bL35 family.

The polypeptide is Large ribosomal subunit protein bL35 (Bacillus velezensis (strain DSM 23117 / BGSC 10A6 / LMG 26770 / FZB42) (Bacillus amyloliquefaciens subsp. plantarum)).